The primary structure comprises 110 residues: U1-lycotoxin-Ls1ii (110 aa).

Residues Met1–Ala20 form the signal peptide. A propeptide spanning residues Glu21–Arg44 is cleaved from the precursor. Intrachain disulfides connect Cys47-Cys62, Cys54-Cys71, Cys61-Cys89, and Cys73-Cys87.

The protein belongs to the neurotoxin 19 (CSTX) family. 03 subfamily. Expressed by the venom gland.

The protein resides in the secreted. This is U1-lycotoxin-Ls1ii from Lycosa singoriensis (Wolf spider).